A 610-amino-acid chain; its full sequence is Granule-bound starch synthase 1, chloroplastic/amyloplastic (610 aa).

Residues 1 to 79 constitute a chloroplast transit peptide; the sequence is MATVTASSNF…SKVKTAGKIV (79 aa). ADP-alpha-D-glucose is bound at residue Lys-98. Positions 438 to 454 form a coiled coil; sequence TGKKKMEAQILELEEKF.

Belongs to the glycosyltransferase 1 family. Bacterial/plant glycogen synthase subfamily. In terms of assembly, interacts with PTST. This interaction is critical for the localization to starch granules. As to expression, expressed in roots, inflorescences, flowers, fruits and at much higher levels in leaves.

The protein localises to the plastid. It is found in the chloroplast. It catalyses the reaction an NDP-alpha-D-glucose + [(1-&gt;4)-alpha-D-glucosyl](n) = [(1-&gt;4)-alpha-D-glucosyl](n+1) + a ribonucleoside 5'-diphosphate + H(+). The protein operates within glycan biosynthesis; starch biosynthesis. Functionally, required for the synthesis of amylose. Destroyed as it is released from the starch granules during the night. The circadian expression is controlled by CCA1 and LHY transcription factors. This Arabidopsis thaliana (Mouse-ear cress) protein is Granule-bound starch synthase 1, chloroplastic/amyloplastic.